The chain runs to 485 residues: UDP-N-acetylmuramoyl-L-alanyl-D-glutamate--2,6-diaminopimelate ligase (485 aa).

The UDP-N-acetyl-alpha-D-muramoyl-L-alanyl-D-glutamate site is built by leucine 27 and serine 29. Glycine 106–serine 112 provides a ligand contact to ATP. UDP-N-acetyl-alpha-D-muramoyl-L-alanyl-D-glutamate-binding positions include threonine 148 to threonine 149, serine 175, glutamine 181, and arginine 183. Residue lysine 215 is modified to N6-carboxylysine. Meso-2,6-diaminopimelate is bound by residues arginine 382, aspartate 406–arginine 409, glycine 454, and glutamate 458. The Meso-diaminopimelate recognition motif motif lies at aspartate 406–arginine 409.

Belongs to the MurCDEF family. MurE subfamily. It depends on Mg(2+) as a cofactor. In terms of processing, carboxylation is probably crucial for Mg(2+) binding and, consequently, for the gamma-phosphate positioning of ATP.

The protein localises to the cytoplasm. It carries out the reaction UDP-N-acetyl-alpha-D-muramoyl-L-alanyl-D-glutamate + meso-2,6-diaminopimelate + ATP = UDP-N-acetyl-alpha-D-muramoyl-L-alanyl-gamma-D-glutamyl-meso-2,6-diaminopimelate + ADP + phosphate + H(+). The protein operates within cell wall biogenesis; peptidoglycan biosynthesis. Functionally, catalyzes the addition of meso-diaminopimelic acid to the nucleotide precursor UDP-N-acetylmuramoyl-L-alanyl-D-glutamate (UMAG) in the biosynthesis of bacterial cell-wall peptidoglycan. The protein is UDP-N-acetylmuramoyl-L-alanyl-D-glutamate--2,6-diaminopimelate ligase of Bradyrhizobium diazoefficiens (strain JCM 10833 / BCRC 13528 / IAM 13628 / NBRC 14792 / USDA 110).